Reading from the N-terminus, the 132-residue chain is Small ribosomal subunit protein uS8 (132 aa).

Belongs to the universal ribosomal protein uS8 family. In terms of assembly, part of the 30S ribosomal subunit. Contacts proteins S5 and S12.

In terms of biological role, one of the primary rRNA binding proteins, it binds directly to 16S rRNA central domain where it helps coordinate assembly of the platform of the 30S subunit. The chain is Small ribosomal subunit protein uS8 from Xanthomonas euvesicatoria pv. vesicatoria (strain 85-10) (Xanthomonas campestris pv. vesicatoria).